We begin with the raw amino-acid sequence, 102 residues long: PqqA binding protein (102 aa).

The protein belongs to the PqqD family. As to quaternary structure, monomer. Interacts with PqqE.

It functions in the pathway cofactor biosynthesis; pyrroloquinoline quinone biosynthesis. Its function is as follows. Functions as a PqqA binding protein and presents PqqA to PqqE, in the pyrroloquinoline quinone (PQQ) biosynthetic pathway. The protein is PqqA binding protein of Rhodopseudomonas palustris (strain HaA2).